A 117-amino-acid polypeptide reads, in one-letter code: NADH-ubiquinone oxidoreductase chain 3 (117 aa).

3 helical membrane-spanning segments follow: residues 6-26, 58-78, and 85-105; these read ILIL…ASYI, FFLI…LFPW, and LPLF…LGLI.

This sequence belongs to the complex I subunit 3 family.

The protein resides in the mitochondrion membrane. The catalysed reaction is a ubiquinone + NADH + 5 H(+)(in) = a ubiquinol + NAD(+) + 4 H(+)(out). In terms of biological role, core subunit of the mitochondrial membrane respiratory chain NADH dehydrogenase (Complex I) that is believed to belong to the minimal assembly required for catalysis. Complex I functions in the transfer of electrons from NADH to the respiratory chain. The immediate electron acceptor for the enzyme is believed to be ubiquinone. This chain is NADH-ubiquinone oxidoreductase chain 3 (ND3), found in Sarcophyton glaucum (Toadstool umbrella leather coral).